The chain runs to 185 residues: Ribosome-recycling factor (185 aa).

Belongs to the RRF family.

The protein resides in the cytoplasm. In terms of biological role, responsible for the release of ribosomes from messenger RNA at the termination of protein biosynthesis. May increase the efficiency of translation by recycling ribosomes from one round of translation to another. In Neisseria meningitidis serogroup A / serotype 4A (strain DSM 15465 / Z2491), this protein is Ribosome-recycling factor.